A 229-amino-acid polypeptide reads, in one-letter code: Non-structural protein P8 (229 aa).

The next 2 helical transmembrane spans lie at 119–139 (IIHM…VCTL) and 162–182 (SLNP…MVCA).

Belongs to the orbivirus NS3 family. In terms of assembly, forms homooligomers via coiled-coil motif. Interacts with host OPTN; this interaction inhibits innate immune response.

It localises to the host cell membrane. The protein resides in the host Golgi apparatus. Functionally, plays a role in the inhibition of host innate immune response. Interacts with host OPTN and thus inhibits the recruitment of TBK1 to the host Golgi apparatus. In turn, downstream partner IRF3 cannot be activated and IFN-beta production is impaired. Its function is as follows. Facilitates viral particle release either by increasing plasma membrane permeability through a viroporin-like activity or by viral budding. The sequence is that of Non-structural protein P8 (Segment-10) from Bluetongue virus 17 (isolate USA) (BTV 17).